The following is a 494-amino-acid chain: ATP-dependent RNA helicase HAS1 (494 aa).

Residues 1–23 form a disordered region; that stretch reads MAQTKRSRDESEKEEVVVKADVE. The short motif at 29–57 is the Q motif element; the sequence is HSFKSLNLSQPTMRAIEKMGFSKMTPVQA. The Helicase ATP-binding domain maps to 60–236; that stretch reads IPPLMAGRDV…RISLRPGPLF (177 aa). Position 73 to 80 (73 to 80) interacts with ATP; it reads AKTGSGKT. Residues 183–186 carry the DEAD box motif; that stretch reads DEAD. The Helicase C-terminal domain occupies 250–420; that stretch reads GLEQGYVVCE…NVQSQLEKLI (171 aa). The Bipartite nuclear localization signal motif lies at 262 to 278; sequence KRFLLLFSFLKRNQKKK.

It belongs to the DEAD box helicase family. DDX18/HAS1 subfamily. Associates in the nucleolus with the 60S and pre-60S ribosomal subunits.

The protein resides in the nucleus. It is found in the nucleolus. The catalysed reaction is ATP + H2O = ADP + phosphate + H(+). Its function is as follows. ATP-dependent RNA helicase involved in 40S ribosomal subunit biogenesis. Required for the processing and cleavage of 35S pre-rRNA at sites A0, A1, and A2, leading to mature 18S rRNA. The sequence is that of ATP-dependent RNA helicase HAS1 (HAS1) from Candida glabrata (strain ATCC 2001 / BCRC 20586 / JCM 3761 / NBRC 0622 / NRRL Y-65 / CBS 138) (Yeast).